Consider the following 807-residue polypeptide: Glycerol-3-phosphate acyltransferase (807 aa).

An HXXXXD motif motif is present at residues 308–313 (CHRSHM).

The protein belongs to the GPAT/DAPAT family.

It localises to the cell inner membrane. The catalysed reaction is sn-glycerol 3-phosphate + an acyl-CoA = a 1-acyl-sn-glycero-3-phosphate + CoA. The protein operates within phospholipid metabolism; CDP-diacylglycerol biosynthesis; CDP-diacylglycerol from sn-glycerol 3-phosphate: step 1/3. The chain is Glycerol-3-phosphate acyltransferase from Shewanella baltica (strain OS195).